We begin with the raw amino-acid sequence, 359 residues long: tRNA-specific 2-thiouridylase MnmA (359 aa).

Residues 9–16 (GISGGVDS) and Met-35 contribute to the ATP site. An interaction with target base in tRNA region spans residues 95-97 (NPD). The active-site Nucleophile is the Cys-100. An intrachain disulfide couples Cys-100 to Cys-197. ATP is bound at residue Gly-124. The interaction with tRNA stretch occupies residues 147-149 (KDQ). Residue Cys-197 is the Cysteine persulfide intermediate of the active site. The tract at residues 309 to 310 (RY) is interaction with tRNA.

This sequence belongs to the MnmA/TRMU family.

The protein resides in the cytoplasm. The catalysed reaction is S-sulfanyl-L-cysteinyl-[protein] + uridine(34) in tRNA + AH2 + ATP = 2-thiouridine(34) in tRNA + L-cysteinyl-[protein] + A + AMP + diphosphate + H(+). Functionally, catalyzes the 2-thiolation of uridine at the wobble position (U34) of tRNA, leading to the formation of s(2)U34. This chain is tRNA-specific 2-thiouridylase MnmA, found in Francisella tularensis subsp. holarctica (strain FTNF002-00 / FTA).